The sequence spans 324 residues: Glyoxylate/hydroxypyruvate reductase B (324 aa).

Active-site residues include R237 and E266. H285 (proton donor) is an active-site residue.

Belongs to the D-isomer specific 2-hydroxyacid dehydrogenase family. GhrB subfamily. As to quaternary structure, homodimer.

It is found in the cytoplasm. The catalysed reaction is glycolate + NADP(+) = glyoxylate + NADPH + H(+). It catalyses the reaction (R)-glycerate + NAD(+) = 3-hydroxypyruvate + NADH + H(+). It carries out the reaction (R)-glycerate + NADP(+) = 3-hydroxypyruvate + NADPH + H(+). Functionally, catalyzes the NADPH-dependent reduction of glyoxylate and hydroxypyruvate into glycolate and glycerate, respectively. The chain is Glyoxylate/hydroxypyruvate reductase B from Escherichia fergusonii (strain ATCC 35469 / DSM 13698 / CCUG 18766 / IAM 14443 / JCM 21226 / LMG 7866 / NBRC 102419 / NCTC 12128 / CDC 0568-73).